A 300-amino-acid polypeptide reads, in one-letter code: Ribosomal RNA small subunit methyltransferase H (300 aa).

S-adenosyl-L-methionine is bound by residues 35–37 (GGH), aspartate 55, phenylalanine 82, aspartate 100, and glutamine 107.

It belongs to the methyltransferase superfamily. RsmH family.

Its subcellular location is the cytoplasm. It catalyses the reaction cytidine(1402) in 16S rRNA + S-adenosyl-L-methionine = N(4)-methylcytidine(1402) in 16S rRNA + S-adenosyl-L-homocysteine + H(+). Functionally, specifically methylates the N4 position of cytidine in position 1402 (C1402) of 16S rRNA. In Chlamydia trachomatis serovar L2 (strain ATCC VR-902B / DSM 19102 / 434/Bu), this protein is Ribosomal RNA small subunit methyltransferase H.